A 604-amino-acid polypeptide reads, in one-letter code: Elongation factor 4 (604 aa).

The 183-residue stretch at 8 to 190 (DKIRNFSIIA…AIVNRLPPPR (183 aa)) folds into the tr-type G domain. Residues 20-25 (DHGKST) and 137-140 (NKID) contribute to the GTP site.

This sequence belongs to the TRAFAC class translation factor GTPase superfamily. Classic translation factor GTPase family. LepA subfamily.

It is found in the cell inner membrane. The enzyme catalyses GTP + H2O = GDP + phosphate + H(+). Its function is as follows. Required for accurate and efficient protein synthesis under certain stress conditions. May act as a fidelity factor of the translation reaction, by catalyzing a one-codon backward translocation of tRNAs on improperly translocated ribosomes. Back-translocation proceeds from a post-translocation (POST) complex to a pre-translocation (PRE) complex, thus giving elongation factor G a second chance to translocate the tRNAs correctly. Binds to ribosomes in a GTP-dependent manner. In Hyphomonas neptunium (strain ATCC 15444), this protein is Elongation factor 4.